We begin with the raw amino-acid sequence, 7763 residues long: Nonribosomal peptide synthetase agiA (7763 aa).

Positions 20–168 are condensation 1; it reads APSVMQEEMI…DGWSARALLE (149 aa). The tract at residues 469 to 866 is adenylation 1; that stretch reads EQAASKWPSK…GRADGQIKLR (398 aa). The region spanning 995 to 1071 is the Carrier 1 domain; sequence LPESPAERLL…DVARAMSPSS (77 aa). S1032 bears the O-(pantetheine 4'-phosphoryl)serine mark. Residues 1104 to 1526 form a condensation 2 region; the sequence is IYPCTPQQEG…GLSDQKLITG (423 aa). Positions 1562-1968 are adenylation 2; sequence FEMQADMTPQ…GRIDSQIKLR (407 aa). In terms of domain architecture, Carrier 2 spans 2090-2166; sequence WEQGSIEDKI…SQAKCATSHT (77 aa). S2127 is subject to O-(pantetheine 4'-phosphoryl)serine. Residues 2212–2556 form an epimerase (E) region; the sequence is DHFNQSVLLD…IMPLVFNYQG (345 aa). The segment at 2676–3016 is condensation 3; that stretch reads DIIPCTPMQR…PALVNTLLNF (341 aa). Residues 3136–3531 are adenylation 3; sequence WAAQVPEKVA…GRMDDQIKIR (396 aa). The 77-residue stretch at 3667 to 3743 folds into the Carrier 3 domain; it reads GPESPTEIML…ELATILNTSY (77 aa). An O-(pantetheine 4'-phosphoryl)serine modification is found at S3704. The condensation 4 stretch occupies residues 3789–4238; it reads VMPCTPFQEG…ISQSIDALVQ (450 aa). Positions 4321-4687 are adenylation 4; that stretch reads VGSQQPIIPI…GRFDRQIKIR (367 aa). The Carrier 4 domain occupies 4806 to 4880; it reads APTTEREKVI…DLARQLESTA (75 aa). S4840 carries the post-translational modification O-(pantetheine 4'-phosphoryl)serine. Positions 4902 to 5339 are condensation 5; the sequence is SFAQGRLWFL…ALLNDLSMHD (438 aa). An adenylation 5 region spans residues 5361-5765; the sequence is FRQEARSHPD…GRRDDQVKIR (405 aa). The segment at 5820 to 5975 is S-adenosyl-L-methionine-dependent N-methyltransferase; it reads DAWKNVFDTE…YLSEIVQKLV (156 aa). Residues 6306–6381 form the Carrier 5 domain; sequence EYGSEMERIL…RLADRLLSKQ (76 aa). S6341 is modified (O-(pantetheine 4'-phosphoryl)serine). Residues 6378–6399 form a disordered region; that stretch reads LSKQSDSNTEANTSTDGKTQHS. Residues 6379–6399 show a composition bias toward polar residues; sequence SKQSDSNTEANTSTDGKTQHS. The segment at 6424–6883 is condensation 6; that stretch reads MPCTPFQEGV…TVGDAEEAAL (460 aa). The segment at 6913–7327 is adenylation 6; sequence RQAMESPCKI…GRMDSQVKLR (415 aa). Residues 7446–7522 enclose the Carrier 6 domain; the sequence is PSPGTLEATL…SQAFRILCDV (77 aa). S7483 carries the post-translational modification O-(pantetheine 4'-phosphoryl)serine. The tract at residues 7542-7638 is thioesterase (TE); sequence TMVLIHPFFG…TGKGSPFSTV (97 aa).

The protein belongs to the NRP synthetase family.

Nonribosomal peptide synthetase; part of the gene cluster that mediates the biosynthesis of the aspergillicins A and F, 2 cryptic cyclic hexa-depsipeptides. The hexamodular NRPS agiA catalyzes the condensation of the six amino acid residues including N-Me-L-O-Me-tyrosine, L-proline 1, L-proline 2, D-isoleucine, O-acetyl-threonine, and L-isoleucine. The starting condensation domain (C1) of agiA probably loads acetyl-CoA which is condensed on the N-terminus of threonine by the first module to yield O-acetyl-threonine. The second module then loads L-isoleucine. The epimerase (E) domain on module 2 is probably involved in the formation of the D-isoleucine moiety. Modules 3 and 4 further load 2 successive L-prolines. Module 5 is then involved in the condensation of O-Me-L-tyrosine produced by the O-methyltransferase agiB and the N-methyl transferase (NMeT) domain on module 5 probably catalyzes the N-methylation to yield the N-Me-L-O-Me-tyrosine moiety. The A domain of module 5 loads preferentially O-Me-L-tyrosine, but it can also accept L-phenylalanine, which leads to the production of aspergillicin G. Module 6 then loads the last residue, L-isoleucine. The C-terminal thiolesterase (TE) domain probably cyclizes the peptide using the hydroxy group from threonine to form the cyclic depsipeptide. This Aspergillus flavus (strain ATCC 200026 / FGSC A1120 / IAM 13836 / NRRL 3357 / JCM 12722 / SRRC 167) protein is Nonribosomal peptide synthetase agiA.